The following is a 47-amino-acid chain: Large ribosomal subunit protein eL40 (47 aa).

This sequence belongs to the eukaryotic ribosomal protein eL40 family.

The chain is Large ribosomal subunit protein eL40 from Methanocaldococcus jannaschii (strain ATCC 43067 / DSM 2661 / JAL-1 / JCM 10045 / NBRC 100440) (Methanococcus jannaschii).